The sequence spans 120 residues: Holo-[acyl-carrier-protein] synthase (120 aa).

Mg(2+) contacts are provided by D6 and E55.

It belongs to the P-Pant transferase superfamily. AcpS family. The cofactor is Mg(2+).

It is found in the cytoplasm. The enzyme catalyses apo-[ACP] + CoA = holo-[ACP] + adenosine 3',5'-bisphosphate + H(+). Transfers the 4'-phosphopantetheine moiety from coenzyme A to a Ser of acyl-carrier-protein. This Pelodictyon phaeoclathratiforme (strain DSM 5477 / BU-1) protein is Holo-[acyl-carrier-protein] synthase.